The primary structure comprises 140 residues: Putative pre-16S rRNA nuclease (140 aa).

This sequence belongs to the YqgF nuclease family.

It localises to the cytoplasm. Functionally, could be a nuclease involved in processing of the 5'-end of pre-16S rRNA. The sequence is that of Putative pre-16S rRNA nuclease from Aeromonas salmonicida (strain A449).